A 396-amino-acid polypeptide reads, in one-letter code: Ribosomal RNA large subunit methyltransferase I (396 aa).

In terms of domain architecture, PUA spans 2 to 81 (SVRLVLTKGR…ETIDIAFFTR (80 aa)).

It belongs to the methyltransferase superfamily. RlmI family.

Its subcellular location is the cytoplasm. The catalysed reaction is cytidine(1962) in 23S rRNA + S-adenosyl-L-methionine = 5-methylcytidine(1962) in 23S rRNA + S-adenosyl-L-homocysteine + H(+). Functionally, specifically methylates the cytosine at position 1962 (m5C1962) of 23S rRNA. The polypeptide is Ribosomal RNA large subunit methyltransferase I (Enterobacter sp. (strain 638)).